The chain runs to 890 residues: Alanine--tRNA ligase (890 aa).

Zn(2+)-binding residues include His573, His577, Cys676, and His680.

It belongs to the class-II aminoacyl-tRNA synthetase family. Zn(2+) serves as cofactor.

The protein localises to the cytoplasm. It carries out the reaction tRNA(Ala) + L-alanine + ATP = L-alanyl-tRNA(Ala) + AMP + diphosphate. In terms of biological role, catalyzes the attachment of alanine to tRNA(Ala) in a two-step reaction: alanine is first activated by ATP to form Ala-AMP and then transferred to the acceptor end of tRNA(Ala). Also edits incorrectly charged Ser-tRNA(Ala) and Gly-tRNA(Ala) via its editing domain. The polypeptide is Alanine--tRNA ligase (Corynebacterium efficiens (strain DSM 44549 / YS-314 / AJ 12310 / JCM 11189 / NBRC 100395)).